Reading from the N-terminus, the 332-residue chain is Serpentine receptor class alpha-10 (332 aa).

Topologically, residues 1–26 (MTSSNISICATEDQMVLQTSLLLRVN) are extracellular. The chain crosses the membrane as a helical span at residues 27–47 (VILMTTVAIFTFVLTYRALFI). The Cytoplasmic portion of the chain corresponds to 48-64 (LKQRPIFHKSTKILLYT). The chain crosses the membrane as a helical span at residues 65–85 (SLIFVNIHEIIFMVIQCVAFI). The Extracellular segment spans residues 86 to 109 (RSFTLSDKPCEIMRTTLECRFKNH). Residues 110–132 (VLIFGIAGMNFNQFGLTVDRLLA) traverse the membrane as a helical segment. At 133–146 (TVIPQTYSHLGSFP) the chain is on the cytoplasmic side. A helical transmembrane segment spans residues 147–167 (GILISILVIGCSIAAPLIIAI). Residues 168–191 (GDPYDDIVPNCFFFPQHSAPRANV) are Extracellular-facing. A helical transmembrane segment spans residues 192-212 (FLIILSALVIASIFLNLIIIF). Over 213-239 (ANKKLEKGTRYYVSQRYQKREALISTR) the chain is Cytoplasmic. Residues 240–260 (IIVYIAASQFLGMVLYSTIVL) form a helical membrane-spanning segment. Topologically, residues 261 to 276 (TLRLHKSMIPVSMYHN) are extracellular. A helical transmembrane segment spans residues 277–297 (IVWWAYTVPFAAVALPALLIH). The Cytoplasmic segment spans residues 298–332 (RINLVGSNRKRVINRITAKVETQEEHMKSLKELWG).

The protein belongs to the nematode receptor-like protein sra family.

It is found in the membrane. The sequence is that of Serpentine receptor class alpha-10 from Caenorhabditis briggsae.